A 281-amino-acid polypeptide reads, in one-letter code: 33 kDa chaperonin (281 aa).

Intrachain disulfides connect C229/C231 and C262/C265.

This sequence belongs to the HSP33 family. In terms of processing, under oxidizing conditions two disulfide bonds are formed involving the reactive cysteines. Under reducing conditions zinc is bound to the reactive cysteines and the protein is inactive.

It is found in the cytoplasm. Functionally, redox regulated molecular chaperone. Protects both thermally unfolding and oxidatively damaged proteins from irreversible aggregation. Plays an important role in the bacterial defense system toward oxidative stress. The chain is 33 kDa chaperonin from Pseudoalteromonas translucida (strain TAC 125).